The primary structure comprises 431 residues: MEKTVKKVKRIEGSLRVPSDKSISHRAIILSSLADGTSIVKNFLKAGDTLTTVNAYRKLGVEIVEKEGVYYVHGKGLDGLKEPDDLLDMGNSGTTTRLTLGVLAGFDFFAALTGDDSLRKRPMKRVAEPLSKMGAKIDGRKDGNLLPISIRGGKLTGIDFFNEKMSAQVKSAILLAGLFAKGDTTVIEPVISRDHTENMLNSMGAYVSREFTKDGYRVTVKKADKLNPIHINVPADPSSAAFFAAAASIISGSHIELKDVLINPTRDGFFRKLKEMGAKVEYKNKRDEAGEIVADIYISYHELKGVKVEPQEVPSMIDEIPLLAIIATQAEGETVITGAHELRVKESDRIKSVIENFKRLGLEAEELPDGMIIRGKQKVKGGIVDSYKDHRIAMGFAILGLVSEEGITIKDADCVYISYPEFFNHLEKVSK.

Residues Lys21, Ser22, and Arg26 each contribute to the 3-phosphoshikimate site. Lys21 serves as a coordination point for phosphoenolpyruvate. Phosphoenolpyruvate-binding residues include Gly93 and Arg121. 3-phosphoshikimate is bound by residues Ser166, Gln168, Asp318, and Lys345. Gln168 is a phosphoenolpyruvate binding site. Catalysis depends on Asp318, which acts as the Proton acceptor. Residues Arg349 and Arg391 each contribute to the phosphoenolpyruvate site.

Belongs to the EPSP synthase family. Monomer.

The protein localises to the cytoplasm. The enzyme catalyses 3-phosphoshikimate + phosphoenolpyruvate = 5-O-(1-carboxyvinyl)-3-phosphoshikimate + phosphate. It functions in the pathway metabolic intermediate biosynthesis; chorismate biosynthesis; chorismate from D-erythrose 4-phosphate and phosphoenolpyruvate: step 6/7. In terms of biological role, catalyzes the transfer of the enolpyruvyl moiety of phosphoenolpyruvate (PEP) to the 5-hydroxyl of shikimate-3-phosphate (S3P) to produce enolpyruvyl shikimate-3-phosphate and inorganic phosphate. The sequence is that of 3-phosphoshikimate 1-carboxyvinyltransferase from Sulfurihydrogenibium sp. (strain YO3AOP1).